The primary structure comprises 276 residues: Shikimate dehydrogenase (NADP(+)) (276 aa).

Shikimate is bound by residues 15–17 (SKS) and Thr-62. Lys-66 functions as the Proton acceptor in the catalytic mechanism. Glu-78 contacts NADP(+). Positions 87 and 103 each coordinate shikimate. NADP(+)-binding positions include 128 to 132 (GAGGA) and Ile-217. Tyr-219 is a binding site for shikimate. Gly-240 lines the NADP(+) pocket.

Belongs to the shikimate dehydrogenase family. Homodimer.

The catalysed reaction is shikimate + NADP(+) = 3-dehydroshikimate + NADPH + H(+). It functions in the pathway metabolic intermediate biosynthesis; chorismate biosynthesis; chorismate from D-erythrose 4-phosphate and phosphoenolpyruvate: step 4/7. Involved in the biosynthesis of the chorismate, which leads to the biosynthesis of aromatic amino acids. Catalyzes the reversible NADPH linked reduction of 3-dehydroshikimate (DHSA) to yield shikimate (SA). The polypeptide is Shikimate dehydrogenase (NADP(+)) (Lysinibacillus sphaericus (strain C3-41)).